The chain runs to 362 residues: Phospho-N-acetylmuramoyl-pentapeptide-transferase (362 aa).

The next 10 membrane-spanning stretches (helical) occupy residues 18–38, 73–93, 97–117, 134–154, 160–180, 200–220, 237–257, 264–284, 289–309, and 339–359; these read VFGY…AISL, TMGG…WGDL, YVWV…VDDW, YFWT…SATT, LIVP…FIAL, GLAI…AYVA, AGEL…FLWF, VFMG…IAVV, IVLF…MVQV, and QVVV…LSTL.

It belongs to the glycosyltransferase 4 family. MraY subfamily. Mg(2+) is required as a cofactor.

The protein resides in the cell inner membrane. It carries out the reaction UDP-N-acetyl-alpha-D-muramoyl-L-alanyl-gamma-D-glutamyl-meso-2,6-diaminopimeloyl-D-alanyl-D-alanine + di-trans,octa-cis-undecaprenyl phosphate = di-trans,octa-cis-undecaprenyl diphospho-N-acetyl-alpha-D-muramoyl-L-alanyl-D-glutamyl-meso-2,6-diaminopimeloyl-D-alanyl-D-alanine + UMP. Its pathway is cell wall biogenesis; peptidoglycan biosynthesis. Catalyzes the initial step of the lipid cycle reactions in the biosynthesis of the cell wall peptidoglycan: transfers peptidoglycan precursor phospho-MurNAc-pentapeptide from UDP-MurNAc-pentapeptide onto the lipid carrier undecaprenyl phosphate, yielding undecaprenyl-pyrophosphoryl-MurNAc-pentapeptide, known as lipid I. This is Phospho-N-acetylmuramoyl-pentapeptide-transferase from Azoarcus sp. (strain BH72).